We begin with the raw amino-acid sequence, 208 residues long: Protein-L-isoaspartate O-methyltransferase (208 aa).

Ser-59 is an active-site residue.

Belongs to the methyltransferase superfamily. L-isoaspartyl/D-aspartyl protein methyltransferase family.

It localises to the cytoplasm. It catalyses the reaction [protein]-L-isoaspartate + S-adenosyl-L-methionine = [protein]-L-isoaspartate alpha-methyl ester + S-adenosyl-L-homocysteine. Its function is as follows. Catalyzes the methyl esterification of L-isoaspartyl residues in peptides and proteins that result from spontaneous decomposition of normal L-aspartyl and L-asparaginyl residues. It plays a role in the repair and/or degradation of damaged proteins. In Escherichia fergusonii (strain ATCC 35469 / DSM 13698 / CCUG 18766 / IAM 14443 / JCM 21226 / LMG 7866 / NBRC 102419 / NCTC 12128 / CDC 0568-73), this protein is Protein-L-isoaspartate O-methyltransferase.